The chain runs to 292 residues: Ribosomal RNA small subunit methyltransferase A (292 aa).

Residues Asn-28, Leu-30, Gly-55, Glu-77, Asp-103, and Asn-123 each coordinate S-adenosyl-L-methionine.

It belongs to the class I-like SAM-binding methyltransferase superfamily. rRNA adenine N(6)-methyltransferase family. RsmA subfamily.

It is found in the cytoplasm. It catalyses the reaction adenosine(1518)/adenosine(1519) in 16S rRNA + 4 S-adenosyl-L-methionine = N(6)-dimethyladenosine(1518)/N(6)-dimethyladenosine(1519) in 16S rRNA + 4 S-adenosyl-L-homocysteine + 4 H(+). Specifically dimethylates two adjacent adenosines (A1518 and A1519) in the loop of a conserved hairpin near the 3'-end of 16S rRNA in the 30S particle. May play a critical role in biogenesis of 30S subunits. The protein is Ribosomal RNA small subunit methyltransferase A of Methylobacterium radiotolerans (strain ATCC 27329 / DSM 1819 / JCM 2831 / NBRC 15690 / NCIMB 10815 / 0-1).